Here is a 1997-residue protein sequence, read N- to C-terminus: MSRWLFPWSSSIKTRACRYLLQHYLGHYLEERLSLEQLSLDLYNGSGRLTDIHLDIWSVNELLDSAGAPLEIIDGFIGSISVTIPWSALVTENCTLEVSKLQVTCRPKYRGAAQGTESQSWSSCMTTSMQLAQECLKEQPEEPSEPPQPIEGLEMFAQTIETVLRRIKVTFIDTIVRIENNPGDSNLGTALEIHIKRLDYCDEAVRDSPHTVPVDIHQPPAFIQKILQLSGVSLHYEEFKTSVQTPSPTPENPLESEPVQPSKTPSWPEEPQPAPSPIQQIGSCSGCTELTIKLKQNDLFPGPKLDIDGKIGSVHLFLTPRQISNLQEILDALSISESSAIREKLLKSRPLDLEDLKLIEQDLNQQLQSGPGSLFVPDPELVPFQTIENGDMFYSMAAMTNSMTSIRSANELSDIDLESSMYSDYSSQQIPSLTPGIMLSSPRKYGRTPFSATLPQNLHKLPGKSSHPPSMELLKPEMLLRLTLGGLTVTVPHISTYISPQEDPACPEVARHFFRELGYFKDSAFSGRDFSHLRGQFEKACHLSNIRVTAVAVQLVCEQRVGGGTHQSSVDLSCGRLEILECLRQGESTSRRTKNTEYTKLMTFCSPSTSSRPCAQIHYKRSQKTPTRSSRKKQEIKVSSEILVELEEFQTDIDLGLLDRLGSIFQNGACRESYSQNDLHMTDVPQSSEDMEIRVVASKSHICLQFPVPDLRPSLERRPWAEKAVRKDCLQMEVADLDIHSQSKTGTDEARKIEITFSDLHGVYTDGEKLNVPCIRVSKGADPLAKAGGKKFIFPSILVAILPQSKVSPWYLAQDKIDDIDHPSVESPCELKQPEPSPFSSKRTMFETEEMVIPADPNEMADFQHVTLASSQYTLEITLPRAHVFFPSKEVYESLYNRLCNDLLMWEPVPELGASISDSLLSAEPHTTSNYQQDTFRMCKSAFKLDSDSDDEDSHFYSVDEAARHRRGAQDGQSYFSASVTILKGRITAWTEAKGEGAKKLDDHHGEVVLDVENGCIFSVSKYRGKEDLSYLCIQSESVALYHKATVKDYLAPVSLEIPTFLHPTNLDPTIYLSEEGVSAQLSGARKDRNQKMLSLAVRIDLNLVKNVKEFLVALRLDGATLRHHMALPYQSWHSQILDFLDVVDEPILGYSPPAVITVLHTHLFSCAVDYRPLYLPIRVLITAETFTLSSNIVVDTSTFLLRFILDDSALYLSDKCDAEVTDLRKDYVCVLDVDLLELVITTWKGNASSKLTQPLFELRCSNNVLHIHTCADSCAMLVNLTQYVMNNGDLHCPPKPEPPTEIAGQKLQPPEGPSSLPPCLPAETAQINQGDLTDALIDTGRTGKEQPETAISVDAALLEESPVSVYLFPEEIKSGNKRQTTSPSPPPLTEGRVSQESLGLSDTSGDSELTDTDDFCILDAPGIGVPPKDGEPVVRKLVDSPIAVRDGHFSRPLGSTDLLKPPAKFPVPETRIVLREISVVWHLYGGKDFGSSRPNSARAQSPRSRTSFHNARGSPSRSSVTNRPQNTWRTQGGNGRIHDILMEIQLTKVSFQHESYPEPLADGEEKLHTGDLDELPLARQVFIVQELEIRDRLASSHINKFLYLYTSEKMPRRAHSNMLTIKALHVRPEAGLGGPECYLRMSLMPLRLNIDQDALFFLKDFFTSLASGIQTIVPMELGSEASRLDGPAKSSSDCELEQETSQGSTEDETMSPSSSTDQPIYFREFRFTSEVPIWLDYQGKHVTTEQVGTFAGILIGLAQLNCSELKLKRLYCRHGLLGADKVVSYALNEWLTDIRKNQLPGILGGVGPMHSVVQLFHGVRDLFWLPIEQYRKDGRIIRGLQRGAASFGTSTASAALELSNRLVQAIQATAETVYDILSPTPPVSRCALDVRQSRKLRRGQQPADLREGVAKAYDTVREGVIDTAHTICEVASRGHEQKGLTGAVGGVLRQIPPTVVKPFIVATEATSNLLGGMRNQIRPDAHKEDALKWRADEGQD.

The Chorein N-terminal domain occupies 17-119 (CRYLLQHYLG…RGAAQGTESQ (103 aa)). Disordered regions lie at residues 241-281 (TSVQ…IQQI), 1292-1323 (HCPP…CLPA), 1371-1414 (EEIK…TDTD), 1492-1534 (SSRP…TQGG), and 1684-1718 (RLDG…SSTD). The span at 1311–1321 (PEGPSSLPPCL) shows a compositional bias: pro residues. Composition is skewed to polar residues over residues 1393 to 1408 (RVSQ…SGDS), 1493 to 1532 (SRPN…WRTQ), and 1690 to 1718 (KSSS…SSTD).

The protein belongs to the ATG2 family.

Its subcellular location is the preautophagosomal structure membrane. The protein localises to the lipid droplet. It is found in the endoplasmic reticulum membrane. It catalyses the reaction a 1,2-diacyl-sn-glycero-3-phospho-L-serine(in) = a 1,2-diacyl-sn-glycero-3-phospho-L-serine(out). The enzyme catalyses a 1,2-diacyl-sn-glycero-3-phosphoethanolamine(in) = a 1,2-diacyl-sn-glycero-3-phosphoethanolamine(out). Its function is as follows. Lipid transfer protein involved in autophagosome assembly. Tethers the edge of the isolation membrane (IM) to the endoplasmic reticulum (ER) and mediates direct lipid transfer from ER to IM for IM expansion. Binds to the ER exit site (ERES), which is the membrane source for autophagosome formation, and extracts phospholipids from the membrane source and transfers them to atg9 (atg9a or atg9b) to the IM for membrane expansion. Also regulates lipid droplets morphology and distribution within the cell. The protein is Autophagy-related protein 2 homolog A of Xenopus tropicalis (Western clawed frog).